The sequence spans 102 residues: Large ribosomal subunit protein uL24 (102 aa).

This sequence belongs to the universal ribosomal protein uL24 family. Part of the 50S ribosomal subunit.

In terms of biological role, one of two assembly initiator proteins, it binds directly to the 5'-end of the 23S rRNA, where it nucleates assembly of the 50S subunit. Functionally, one of the proteins that surrounds the polypeptide exit tunnel on the outside of the subunit. The chain is Large ribosomal subunit protein uL24 from Rhizobium johnstonii (strain DSM 114642 / LMG 32736 / 3841) (Rhizobium leguminosarum bv. viciae).